Here is a 231-residue protein sequence, read N- to C-terminus: MWNDMKLAIAFLSRVPVPLKQNKGNLKKICAYFTFVGYLAGVFYFSMKLISENFLWTLLSVALGFYLFDLFHFDGLLDTLDGFFYQGTKERRFEIMSKGDIGPFAFFYAALYIVAYLYAFLHVDPIDLIYVAVLGRFSMNILLHFGKPAKNTGLGKLLHPYEKKHTLISLVFTIPLVYFPLNYIISLSIALLLGSSMHFITNRKIEGYTGDVLGATCMFSQLSIMVALSLI.

6 helical membrane-spanning segments follow: residues 29–49 (ICAY…SMKL), 53–73 (NFLW…LFHF), 101–121 (IGPF…YAFL), 126–146 (IDLI…LHFG), 167–187 (LISL…IISL), and 211–231 (DVLG…LSLI).

This sequence belongs to the CobS family. The cofactor is Mg(2+).

The protein resides in the cell inner membrane. The enzyme catalyses alpha-ribazole + adenosylcob(III)inamide-GDP = adenosylcob(III)alamin + GMP + H(+). The catalysed reaction is alpha-ribazole 5'-phosphate + adenosylcob(III)inamide-GDP = adenosylcob(III)alamin 5'-phosphate + GMP + H(+). It participates in cofactor biosynthesis; adenosylcobalamin biosynthesis; adenosylcobalamin from cob(II)yrinate a,c-diamide: step 7/7. Its function is as follows. Joins adenosylcobinamide-GDP and alpha-ribazole to generate adenosylcobalamin (Ado-cobalamin). Also synthesizes adenosylcobalamin 5'-phosphate from adenosylcobinamide-GDP and alpha-ribazole 5'-phosphate. The sequence is that of Adenosylcobinamide-GDP ribazoletransferase from Kosmotoga olearia (strain ATCC BAA-1733 / DSM 21960 / TBF 19.5.1).